The sequence spans 256 residues: GTP cyclohydrolase FolE2 (256 aa).

The protein belongs to the GTP cyclohydrolase IV family.

It carries out the reaction GTP + H2O = 7,8-dihydroneopterin 3'-triphosphate + formate + H(+). The protein operates within cofactor biosynthesis; 7,8-dihydroneopterin triphosphate biosynthesis; 7,8-dihydroneopterin triphosphate from GTP: step 1/1. Functionally, converts GTP to 7,8-dihydroneopterin triphosphate. The protein is GTP cyclohydrolase FolE2 of Caldicellulosiruptor bescii (strain ATCC BAA-1888 / DSM 6725 / KCTC 15123 / Z-1320) (Anaerocellum thermophilum).